The sequence spans 334 residues: N-acetyl-gamma-glutamyl-phosphate reductase (334 aa).

Residue Cys154 is part of the active site.

This sequence belongs to the NAGSA dehydrogenase family. Type 1 subfamily.

Its subcellular location is the cytoplasm. The catalysed reaction is N-acetyl-L-glutamate 5-semialdehyde + phosphate + NADP(+) = N-acetyl-L-glutamyl 5-phosphate + NADPH + H(+). It functions in the pathway amino-acid biosynthesis; L-arginine biosynthesis; N(2)-acetyl-L-ornithine from L-glutamate: step 3/4. Its function is as follows. Catalyzes the NADPH-dependent reduction of N-acetyl-5-glutamyl phosphate to yield N-acetyl-L-glutamate 5-semialdehyde. The sequence is that of N-acetyl-gamma-glutamyl-phosphate reductase from Pectobacterium carotovorum subsp. carotovorum (strain PC1).